A 202-amino-acid chain; its full sequence is Polyamine-modulated factor 1 (202 aa).

Residues 1–15 show a composition bias toward basic and acidic residues; the sequence is MAEVSRDSEAAERGP. Positions 1-26 are disordered; it reads MAEVSRDSEAAERGPEGSSPEAVPGD. A coiled-coil region spans residues 153–194; that stretch reads EAKNQELADAVLAGRRQVEELQQQVRALQQTWQALHREQREL.

As to quaternary structure, component of the MIS12 complex composed of MIS12, DSN1, NSL1 and PMF1. Interacts with COPS7A. Interacts via its coiled-coil domain with the leucine-zipper domain of NFE2L2. The interaction with NFE2L2 is required for the transcriptional regulation of SSAT.

The protein localises to the nucleus. It localises to the chromosome. The protein resides in the centromere. It is found in the kinetochore. Its function is as follows. Part of the MIS12 complex which is required for normal chromosome alignment and segregation and for kinetochore formation during mitosis. May act as a cotranscription partner of NFE2L2 involved in regulation of polyamine-induced transcription of SSAT. This is Polyamine-modulated factor 1 from Mus musculus (Mouse).